Consider the following 468-residue polypeptide: Pentatricopeptide repeat-containing protein At5g46680 (468 aa).

12 PPR repeats span residues 12–46, 47–81, 82–116, 117–152, 153–183, 187–221, 222–256, 257–291, 293–327, 328–362, 363–393, and 394–428; these read STKL…GVLP, DVIT…GIEP, DVTT…GLSP, DMWS…GLVP, GIDT…LKSR, ELMT…GYTP, NAVT…GYTF, DGFA…GTRS, DIVS…GLKP, DDYT…GMQP, SVVT…MEVR, and DEFT…GMKI.

Belongs to the PPR family. P subfamily.

In Arabidopsis thaliana (Mouse-ear cress), this protein is Pentatricopeptide repeat-containing protein At5g46680.